We begin with the raw amino-acid sequence, 316 residues long: Ribosomal RNA small subunit methyltransferase H (316 aa).

Residues 35–37, D55, F80, D102, and Q109 contribute to the S-adenosyl-L-methionine site; that span reads GGH.

The protein belongs to the methyltransferase superfamily. RsmH family.

It localises to the cytoplasm. It catalyses the reaction cytidine(1402) in 16S rRNA + S-adenosyl-L-methionine = N(4)-methylcytidine(1402) in 16S rRNA + S-adenosyl-L-homocysteine + H(+). In terms of biological role, specifically methylates the N4 position of cytidine in position 1402 (C1402) of 16S rRNA. This Colwellia psychrerythraea (strain 34H / ATCC BAA-681) (Vibrio psychroerythus) protein is Ribosomal RNA small subunit methyltransferase H.